Here is a 675-residue protein sequence, read N- to C-terminus: UvrABC system protein B (675 aa).

The Helicase ATP-binding domain maps to 32 to 417; it reads EGLSDGLAYQ…EHAGQVVEQV (386 aa). Position 45–52 (45–52) interacts with ATP; the sequence is GVTGSGKT. The Beta-hairpin signature appears at 98 to 121; it reads YYDYYQPEAYVPSRDLFIEKDSAI. The Helicase C-terminal domain maps to 436–602; it reads QVDDLMSEIN…QIKKQVKDII (167 aa). A UVR domain is found at 634-669; sequence IKEIAKLEKAMQQAARDLQFEEAAVLRDRIRDIKEN.

It belongs to the UvrB family. Forms a heterotetramer with UvrA during the search for lesions. Interacts with UvrC in an incision complex.

It is found in the cytoplasm. In terms of biological role, the UvrABC repair system catalyzes the recognition and processing of DNA lesions. A damage recognition complex composed of 2 UvrA and 2 UvrB subunits scans DNA for abnormalities. Upon binding of the UvrA(2)B(2) complex to a putative damaged site, the DNA wraps around one UvrB monomer. DNA wrap is dependent on ATP binding by UvrB and probably causes local melting of the DNA helix, facilitating insertion of UvrB beta-hairpin between the DNA strands. Then UvrB probes one DNA strand for the presence of a lesion. If a lesion is found the UvrA subunits dissociate and the UvrB-DNA preincision complex is formed. This complex is subsequently bound by UvrC and the second UvrB is released. If no lesion is found, the DNA wraps around the other UvrB subunit that will check the other stand for damage. The polypeptide is UvrABC system protein B (Neisseria meningitidis serogroup B (strain ATCC BAA-335 / MC58)).